The chain runs to 232 residues: (S)-2-haloacid dehalogenase (232 aa).

Catalysis depends on aspartate 10, which acts as the Nucleophile. An (S)-2-haloacid contacts are provided by residues 11–12, arginine 41, and 118–119; these read LY and SN. Residues 175–180 are important for catalytic activity; sequence SSNAWD.

The protein belongs to the HAD-like hydrolase superfamily. S-2-haloalkanoic acid dehalogenase family. Homodimer.

It carries out the reaction an (S)-2-haloacid + H2O = a (2R)-2-hydroxycarboxylate + a halide anion + H(+). It catalyses the reaction (S)-2-chloropropanoate + H2O = (R)-lactate + chloride + H(+). Functionally, catalyzes the hydrolytic dehalogenation of small (S)-2-haloalkanoic acids to yield the corresponding (R)-2-hydroxyalkanoic acids. Acts on acids of short chain lengths, C(2) to C(4), with inversion of configuration at C-2. Active with 2-halogenated carboxylic acids and converts only the S-isomer (or L-isomer) of 2-chloropropionic acid with inversion of configuration to produce R-lactate (or D-isomer). The chain is (S)-2-haloacid dehalogenase from Pseudomonas sp. (strain YL).